The following is a 350-amino-acid chain: Quinone oxidoreductase-like protein 2 (350 aa).

N6-acetyllysine is present on K36. N6-succinyllysine is present on K201. N6-acetyllysine occurs at positions 302 and 328.

This sequence belongs to the zinc-containing alcohol dehydrogenase family. Quinone oxidoreductase subfamily.

In Rattus norvegicus (Rat), this protein is Quinone oxidoreductase-like protein 2.